The sequence spans 139 residues: Probable disulfide formation protein C 1 (139 aa).

A helical membrane pass occupies residues 8-27 (EYALFTAWGASFIATLGSLY). Residues Cys37 and Cys40 are joined by a disulfide bond. The next 2 membrane-spanning stretches (helical) occupy residues 42–61 (YQRI…VVKK) and 68–85 (YSLP…YHYV). Cys99 and Cys104 are oxidised to a cystine. A helical membrane pass occupies residues 113-135 (GFVTIPFLALIGFITIAVCSFIV).

This sequence belongs to the DsbB family. BdbC subfamily.

It is found in the cell membrane. Required for disulfide bond formation in some proteins. The protein is Probable disulfide formation protein C 1 (bdbC1) of Bacillus anthracis.